A 667-amino-acid chain; its full sequence is Flavin-dependent halogenase malA (667 aa).

Residues H48, E70, I79, and S82 each coordinate FAD. The active site involves K108. R144, V168, D399, and I412 together coordinate FAD. E494 contacts substrate. Zn(2+)-binding residues include C597, C600, C613, and C616. Residues 621–646 (TEPQTAVTFDPPLTAEEEALLYAAWN) form a flexible region region.

It belongs to the flavin-dependent halogenase family. The cofactor is Zn(2+).

The enzyme catalyses (+)-premalbrancheamide + 2 FAD + 2 chloride + 4 H(+) = (+)-malbrancheamide + 2 FADH2. It carries out the reaction (+)-premalbrancheamide + FAD + chloride + 2 H(+) = (+)-malbrancheamide B + FADH2. It catalyses the reaction (+)-premalbrancheamide + FAD + chloride + 2 H(+) = (+)-isomalbrancheamide B + FADH2. The catalysed reaction is (+)-malbrancheamide B + FAD + chloride + 2 H(+) = (+)-malbrancheamide + FADH2. The enzyme catalyses (+)-isomalbrancheamide B + FAD + chloride + 2 H(+) = (+)-malbrancheamide + FADH2. It carries out the reaction (+)-premalbrancheamide + bromide + FAD + 2 H(+) = (+)-malbrancheamide C + FADH2. It catalyses the reaction (+)-premalbrancheamide + bromide + FAD + 2 H(+) = (+)-isomalbrancheamide C + FADH2. The catalysed reaction is (+)-malbrancheamide B + bromide + FAD + 2 H(+) = (+)-malbrancheamide D + FADH2. The enzyme catalyses (+)-isomalbrancheamide B + bromide + FAD + 2 H(+) = (+)-isomalbrancheamide D + FADH2. It participates in alkaloid biosynthesis. Flavin-dependent halogenase; part of the gene cluster that mediates the biosynthesis of malbrancheamide, a dichlorinated fungal indole alkaloid that belongs to a family of natural products containing a characteristic bicyclo[2.2.2]diazaoctane core. The first step of malbrancheamide biosynthesis involves coupling of L-proline and L-tryptophan by malG, a bimodular NRPS, to produce L-Pro-L-Trp aldehyde through reductive offloading. This compound undergoes spontaneous cyclization and dehydration to give a dienamine which is reverse prenylated at C-2 by malE. The other prenyltransferase present in the cluster, malB, displays modest activity, suggesting that may be a redundant gene in the pathway. Subsequently, a [4+2] Diels-Alder cyclo-addition catalyzed by the bifunctional enzyme malC forms the characteristic bicyclo[2.2.2]diazaoctane ring of premalbrancheamid. Finally, the flavin-dependent halogenase malA catalyzes the iterative dichlorination of the indole ring of premalbrancheamide to yield C-9 monochlorinated malbrancheamide B, C-8 monochlorinated isomalbrancheamide B, and dichlorinated malbrancheamide. MalA is also able to brominate premalbrancheamide at C-9 to yield malbrancheamide C, and, to a lesser extend, at C-8 to yield isomalbrancheamide C. Finally, malA can brominate C-9 monochlorinated malbrancheamide B at C-8 to yield malbrancheamide D, or C-8 monochlorinated isomalbrancheamide B at C-9 to produce isomalbrancheamide D. In Malbranchea aurantiaca, this protein is Flavin-dependent halogenase malA.